Here is a 337-residue protein sequence, read N- to C-terminus: Eukaryotic translation initiation factor 3 subunit H (337 aa).

One can recognise an MPN domain in the interval 25-158 (VQIEGLAVLK…LKALKLSDSF (134 aa)). Position 178 is a phosphoserine; by ATPK1 (Ser-178). Over residues 267-278 (RRTENMARKSAG) the composition is skewed to basic and acidic residues. Positions 267 to 290 (RRTENMARKSAGEEPLPEEDPSNP) are disordered.

This sequence belongs to the eIF-3 subunit H family. Component of the eukaryotic translation initiation factor 3 (eIF-3) complex. Interacts directly with TIF3A1, TIF3B1, TIF3C1, TIF3E1 and TIF3F1. Associates with the CSN (COP9 signalosome) complex. Binds to CSN1, CSN7 and CSN8. Interacts with ATPK1. In terms of processing, in response to auxin (NAA), phosphorylated at Ser-178 by ATPK1 and binds to polysomes via TOR signaling. This phosphorylation is repressed by Torin-1. As to expression, mostly expressed in roots and flowers, and, to a lower extent, in leaves, stems and siliques.

It is found in the cytoplasm. Functionally, component of the eukaryotic translation initiation factor 3 (eIF-3) complex, which is involved in protein synthesis of a specialized repertoire of mRNAs and, together with other initiation factors, stimulates binding of mRNA and methionyl-tRNAi to the 40S ribosome. The eIF-3 complex specifically targets and initiates translation of a subset of mRNAs involved in cell proliferation (Potential). Regulates translation initiation of specific 5' mRNAs harboring multiple upstream open reading frames (uORFs) in their 5' leader sequence (e.g. BETA-OHASE 2 and LHY). This Arabidopsis thaliana (Mouse-ear cress) protein is Eukaryotic translation initiation factor 3 subunit H (TIF3H1).